Consider the following 37-residue polypeptide: Large ribosomal subunit protein bL36 (37 aa).

This sequence belongs to the bacterial ribosomal protein bL36 family.

The chain is Large ribosomal subunit protein bL36 from Syntrophotalea carbinolica (strain DSM 2380 / NBRC 103641 / GraBd1) (Pelobacter carbinolicus).